The sequence spans 109 residues: UPF0102 protein Suden_1901 (109 aa).

This sequence belongs to the UPF0102 family.

This Sulfurimonas denitrificans (strain ATCC 33889 / DSM 1251) (Thiomicrospira denitrificans (strain ATCC 33889 / DSM 1251)) protein is UPF0102 protein Suden_1901.